A 960-amino-acid chain; its full sequence is Probable RNA-binding protein 19 (960 aa).

Positions 2 to 79 constitute an RRM 1 domain; sequence SRLIVKNLPN…SRITVEFCKS (78 aa). 2 disordered regions span residues 85–119 and 149–294; these read KPRA…KKKK and WAND…TTCH. Phosphoserine occurs at positions 174, 176, and 180. Positions 176–194 are enriched in acidic residues; sequence SGQESEEEGAGEDLEEEAS. The segment covering 273–286 has biased composition (basic and acidic residues); that stretch reads RPPEARAETEKPAN. RRM domains follow at residues 294-369 and 402-480; these read HTVK…REKN and GRLF…PSTI. K481 participates in a covalent cross-link: Glycyl lysine isopeptide (Lys-Gly) (interchain with G-Cter in SUMO2). Residues 491–513 form a disordered region; it reads LGSSSYKKKKEAQDKANSASSHN. An RRM 4 domain is found at 587-659; that stretch reads TVILVKNLPA…VPLYLEWAPV (73 aa). The interval 667–729 is disordered; sequence PQKKKLQDTP…EEEEEESLPG (63 aa). Acidic residues-rich tracts occupy residues 689–706 and 714–726; these read TVPD…EEGA and EEEE…EEES. 2 RRM domains span residues 730–811 and 832–912; these read CTLF…ISER and SKIL…WADS. 3 positions are modified to phosphoserine: S936, S949, and S951.

Belongs to the RRM MRD1 family. In terms of tissue distribution, expressed in the crypts of Lieberkuhn of the intestine and in intestinal neoplasia (at protein level).

The protein localises to the nucleus. Its subcellular location is the nucleolus. The protein resides in the nucleoplasm. It localises to the cytoplasm. It is found in the chromosome. In terms of biological role, plays a role in embryo pre-implantation development. This chain is Probable RNA-binding protein 19 (RBM19), found in Homo sapiens (Human).